Here is a 248-residue protein sequence, read N- to C-terminus: Probable transcriptional regulatory protein RHECIAT_CH0003714 (248 aa).

Belongs to the TACO1 family.

It is found in the cytoplasm. The chain is Probable transcriptional regulatory protein RHECIAT_CH0003714 from Rhizobium etli (strain CIAT 652).